The sequence spans 214 residues: MKFFIDTADVKEIREANELGLVDGVTTNPSLIAKSGRRFEEVIKEITGIVDGPISAEVISLEHDGMIAEATELAKIHPNIVIKLPMTPEGLKATKTLYKRGIKTNVTLIFTPMQALLAAKAGATYVSPFVGRLDDISQNGMGIIQEIRTIFDNYGMDAEIIVASIRNPIHVLDSALIGADVCTIPYSVMLQLAKHPLTDAGIKKFLEDWEKVPK.

Lysine 83 (schiff-base intermediate with substrate) is an active-site residue.

This sequence belongs to the transaldolase family. Type 3B subfamily.

It localises to the cytoplasm. It catalyses the reaction D-sedoheptulose 7-phosphate + D-glyceraldehyde 3-phosphate = D-erythrose 4-phosphate + beta-D-fructose 6-phosphate. It functions in the pathway carbohydrate degradation; pentose phosphate pathway; D-glyceraldehyde 3-phosphate and beta-D-fructose 6-phosphate from D-ribose 5-phosphate and D-xylulose 5-phosphate (non-oxidative stage): step 2/3. Its function is as follows. Transaldolase is important for the balance of metabolites in the pentose-phosphate pathway. The sequence is that of Probable transaldolase from Citrifermentans bemidjiense (strain ATCC BAA-1014 / DSM 16622 / JCM 12645 / Bem) (Geobacter bemidjiensis).